The chain runs to 1066 residues: Pumilio homolog 2 (1066 aa).

The tract at residues 1–260 (MNHDFQALAL…ATVGLFDYNS (260 aa)) is interaction with SNAPIN. A phosphoserine mark is found at S67, S82, and S102. Positions 106-204 (KLDSRFRKGN…NPSEGLGPLP (99 aa)) are disordered. Over residues 119–133 (RDAETDGPEKGDQKG) the composition is skewed to basic and acidic residues. Residues S136, S178, and S182 each carry the phosphoserine modification. 2 positions are modified to phosphothreonine: T184 and T396. Residues 494–553 (STNGLFRPIGTQPPQQQQQQPSTNLQSNSFYGSSSLTNSSQSSSLFSHGPGQPGSTSLGF) form a disordered region. The segment covering 505-514 (QPPQQQQQQP) has biased composition (low complexity). Polar residues predominate over residues 515 to 525 (STNLQSNSFYG). The span at 526-540 (SSSLTNSSQSSSLFS) shows a compositional bias: low complexity. A phosphoserine mark is found at S587 and S592. The interval 620–650 (SPIGMPLPSQTPGHSLTPPPSLSSHGSSSSL) is disordered. Positions 630–650 (TPGHSLTPPPSLSSHGSSSSL) are enriched in low complexity. Omega-N-methylarginine is present on R674. Phosphoserine is present on residues S684 and S700. The PUM-HD domain occupies 706–1048 (GRSRLLEDFR…HILAKLEKYY (343 aa)). Pumilio repeat units follow at residues 726-761 (DLIG…MVFN), 762-797 (EILQ…ALAT), 798-835 (RIRG…EMVK), 836-871 (ELDG…FIID), 872-907 (AFKG…PILE), 908-943 (ELHQ…KIVS), 944-979 (EIRG…LLID), and 983-1022 (CQND…IIMH). An adenine-nucleotide binding in RNA target region spans residues 741–745 (SRFIQ). The segment at 777-781 (NYVIQ) is uracil-nucleotide binding in RNA target. Residues 813-817 (CRVIQ) are adenine-nucleotide binding in RNA target. The non-specific-nucleotide binding in RNA target stretch occupies residues 851 to 855 (NHVVQ). Residues 887–891 (CRVIQ) are adenine-nucleotide binding in RNA target. Residues 923-927 (NYVIQ) form a uracil-nucleotide binding in RNA target region. The interval 959–963 (SNVVE) is guanine-nucleotide binding in RNA target. The uracil-nucleotide binding in RNA target stretch occupies residues 1002-1006 (NYVVQ).

As to quaternary structure, homodimer; homodimerizes in vitro. Interacts with DAZ1, DAZL and NANOS1 via its pumilio repeats. Interacts with NANOS3. Interacts with SNAPIN. Recruits the CCR4-POP2-NOT deadenylase leading to translational inhibition and mRNA degradation. Interacts with DDX20. In case of viral infection, interacts with DHX58. Interacts with TRIM71 (via NHL repeats) in an RNA-dependent manner. As to expression, expressed in male germ cells of adult testis (at protein level). Highly expressed in testis and ovary. Predominantly expressed in stem cells and germ cells. Expressed at lower level in brain, heart, kidney, liver, muscle, placenta, intestine and stomach Expressed in cerebellum, corpus callosum, caudate nucleus, hippocampus, medulla oblongata and putamen. Expressed in all fetal tissues tested.

The protein localises to the cytoplasm. Its subcellular location is the cytoplasmic granule. It localises to the perinuclear region. Its function is as follows. Sequence-specific RNA-binding protein that acts as a post-transcriptional repressor by binding the 3'-UTR of mRNA targets. Binds to an RNA consensus sequence, the Pumilio Response Element (PRE), 5'-UGUANAUA-3', that is related to the Nanos Response Element (NRE) (, PubMed:21397187). Mediates post-transcriptional repression of transcripts via different mechanisms: acts via direct recruitment of the CCR4-POP2-NOT deadenylase leading to translational inhibition and mRNA degradation. Also mediates deadenylation-independent repression by promoting accessibility of miRNAs. Acts as a post-transcriptional repressor of E2F3 mRNAs by binding to its 3'-UTR and facilitating miRNA regulation. Plays a role in cytoplasmic sensing of viral infection. Represses a program of genes necessary to maintain genomic stability such as key mitotic, DNA repair and DNA replication factors. Its ability to repress those target mRNAs is regulated by the lncRNA NORAD (non-coding RNA activated by DNA damage) which, due to its high abundance and multitude of PUMILIO binding sites, is able to sequester a significant fraction of PUM1 and PUM2 in the cytoplasm. May regulate DCUN1D3 mRNA levels. May support proliferation and self-renewal of stem cells. Binds specifically to miRNA MIR199A precursor, with PUM1, regulates miRNA MIR199A expression at a postranscriptional level. The chain is Pumilio homolog 2 (PUM2) from Homo sapiens (Human).